The following is a 135-amino-acid chain: Small ribosomal subunit protein uS12 (135 aa).

Residue D89 is modified to 3-methylthioaspartic acid. A disordered region spans residues 114-135; the sequence is RSRYGAKKGAAKQAAAAKSKKK. Positions 124–135 are enriched in low complexity; the sequence is AKQAAAAKSKKK.

This sequence belongs to the universal ribosomal protein uS12 family. Part of the 30S ribosomal subunit. Contacts proteins S8 and S17. May interact with IF1 in the 30S initiation complex.

Its function is as follows. With S4 and S5 plays an important role in translational accuracy. Functionally, interacts with and stabilizes bases of the 16S rRNA that are involved in tRNA selection in the A site and with the mRNA backbone. Located at the interface of the 30S and 50S subunits, it traverses the body of the 30S subunit contacting proteins on the other side and probably holding the rRNA structure together. The combined cluster of proteins S8, S12 and S17 appears to hold together the shoulder and platform of the 30S subunit. The polypeptide is Small ribosomal subunit protein uS12 (Amoebophilus asiaticus (strain 5a2)).